The chain runs to 1330 residues: DNA-directed RNA polymerase subunit beta'' (1330 aa).

The Zn(2+) site is built by Cys214, Cys282, Cys289, and Cys292.

Belongs to the RNA polymerase beta' chain family. RpoC2 subfamily. As to quaternary structure, in plastids the minimal PEP RNA polymerase catalytic core is composed of four subunits: alpha, beta, beta', and beta''. When a (nuclear-encoded) sigma factor is associated with the core the holoenzyme is formed, which can initiate transcription. The cofactor is Zn(2+).

It localises to the plastid. The protein localises to the chloroplast. It carries out the reaction RNA(n) + a ribonucleoside 5'-triphosphate = RNA(n+1) + diphosphate. Functionally, DNA-dependent RNA polymerase catalyzes the transcription of DNA into RNA using the four ribonucleoside triphosphates as substrates. The protein is DNA-directed RNA polymerase subunit beta'' of Physcomitrium patens (Spreading-leaved earth moss).